We begin with the raw amino-acid sequence, 66 residues long: Large ribosomal subunit protein bL35 (66 aa).

Belongs to the bacterial ribosomal protein bL35 family.

The sequence is that of Large ribosomal subunit protein bL35 from Afipia carboxidovorans (strain ATCC 49405 / DSM 1227 / KCTC 32145 / OM5) (Oligotropha carboxidovorans).